Consider the following 275-residue polypeptide: Putative pyruvate, phosphate dikinase regulatory protein (275 aa).

Residue 151–158 (GVSRTSKT) coordinates ADP.

This sequence belongs to the pyruvate, phosphate/water dikinase regulatory protein family. PDRP subfamily.

It carries out the reaction N(tele)-phospho-L-histidyl/L-threonyl-[pyruvate, phosphate dikinase] + ADP = N(tele)-phospho-L-histidyl/O-phospho-L-threonyl-[pyruvate, phosphate dikinase] + AMP + H(+). It catalyses the reaction N(tele)-phospho-L-histidyl/O-phospho-L-threonyl-[pyruvate, phosphate dikinase] + phosphate + H(+) = N(tele)-phospho-L-histidyl/L-threonyl-[pyruvate, phosphate dikinase] + diphosphate. In terms of biological role, bifunctional serine/threonine kinase and phosphorylase involved in the regulation of the pyruvate, phosphate dikinase (PPDK) by catalyzing its phosphorylation/dephosphorylation. The chain is Putative pyruvate, phosphate dikinase regulatory protein from Rhodospirillum rubrum (strain ATCC 11170 / ATH 1.1.1 / DSM 467 / LMG 4362 / NCIMB 8255 / S1).